The sequence spans 382 residues: uncharacterized protein (382 aa).

Transmembrane regions (helical) follow at residues 8–28, 45–65, 75–95, 102–122, 131–151, 157–177, 204–224, 231–251, 270–290, 291–311, 325–345, and 349–369; these read VMLLLCGLLLLTLAIAVLNTL, MVSSSYFTGNLVGTLFTGYLI, YLASLIFAAGCVGLGGMVGFW, FIAGIGCAMIWVVVESALMCS, LLAAYMMAYYMGTFLGQLLVS, LLHVLPWVTGMILAGILPLLF, LGVNGCIISGIVLGSLYGLMP, GMANASIGFWMAVLVSAGILG, VQVFVVILGSIAMLTQAAMAP, ALFILGAAGFTLYPVAMAWAC, ALLLSYTVGSLLGPSFAAMLM, and SDNLLFIMIASVSFIYLLMLL.

It belongs to the major facilitator superfamily. YcaD (TC 2.A.1.26) family.

It localises to the cell inner membrane. This is an uncharacterized protein from Salmonella dublin (strain CT_02021853).